The chain runs to 55 residues: Conotoxin vc5b (55 aa).

An N-terminal signal peptide occupies residues 1-15 (VILLLLIASAPSVDA). The propeptide occupies 16 to 41 (QPKTKDDVPLAPLHDNAKSALQHLNQ). Q53 bears the Glutamine amide mark.

Post-translationally, contains 2 disulfide bonds that can be either 'C1-C3, C2-C4' or 'C1-C4, C2-C3', since these disulfide connectivities have been observed for conotoxins with cysteine framework V (for examples, see AC P0DQQ7 and AC P81755). Expressed by the venom duct.

Its subcellular location is the secreted. The polypeptide is Conotoxin vc5b (Conus victoriae (Queen Victoria cone)).